The following is an 829-amino-acid chain: Venom phosphodiesterase CdcPDE (829 aa).

2 consecutive SMB domains span residues 8–51 (PQVS…VLPT) and 52–96 (QSWS…GETS). Cystine bridges form between Cys12/Cys16, Cys12/Cys29, Cys16/Cys47, Cys27/Cys29, Cys27/Cys40, Cys33/Cys39, Cys40/Cys47, Cys56/Cys61, Cys56/Cys73, Cys61/Cys91, Cys71/Cys73, Cys71/Cys84, Cys77/Cys83, Cys84/Cys91, Cys102/Cys148, and Cys110/Cys322. Asn17 is a glycosylation site (N-linked (GlcNAc...) asparagine). The Cell attachment site signature appears at 36 to 38 (RQA). A divalent metal cation contacts are provided by Asp125 and Thr163. Residue Thr163 is the AMP-threonine intermediate of the active site. Asn194 and Asn237 each carry an N-linked (GlcNAc...) asparagine glycan. AMP is bound at residue Lys249. Asp283, His287, Asp330, and His331 together coordinate a divalent metal cation. His287 is an AMP binding site. Disulfide bonds link Cys338–Cys435, Cys386–Cys771, Cys519–Cys577, Cys532–Cys632, Cys534–Cys617, and Cys740–Cys750. Residue Asn383 is glycosylated (N-linked (GlcNAc...) asparagine). Residue His440 participates in a divalent metal cation binding. 2 N-linked (GlcNAc...) asparagine glycosylation sites follow: Asn572 and Asn652.

The protein belongs to the nucleotide pyrophosphatase/phosphodiesterase family. In terms of assembly, monomer. The cofactor is a divalent metal cation. In terms of processing, N-glycosylated. Glycosylation counts for an increased mass of ~9%. Contains 16 disulfide bonds. As to expression, expressed by venom gland.

The protein localises to the secreted. It catalyses the reaction ADP + H2O = AMP + phosphate + H(+). Hydrolyzes ADP with high activity. Shows weak or no activity on 5'-AMP, 5'-GMP, 3'-AMP, ATP, cAMP, and cGMP. Is devoid of monophosphatase and proteinase activities. Inhibits ADP-induced platelet aggregation and is cytotoxic to human keratinocytes. Kinetic parameters indicated a higher affinity for the substrate bis(p-nitrophenyl) phosphate compared to others snake venom PDEs. Is recognized by the crotalid antivenom produced by the Instituto Butantan. This Crotalus durissus collilineatus (Brazilian rattlesnake) protein is Venom phosphodiesterase CdcPDE.